Here is a 509-residue protein sequence, read N- to C-terminus: ATP synthase subunit alpha (509 aa).

171–178 (GDRKTGKT) is an ATP binding site.

It belongs to the ATPase alpha/beta chains family. In terms of assembly, F-type ATPases have 2 components, CF(1) - the catalytic core - and CF(0) - the membrane proton channel. CF(1) has five subunits: alpha(3), beta(3), gamma(1), delta(1), epsilon(1). CF(0) has three main subunits: a(1), b(2) and c(9-12). The alpha and beta chains form an alternating ring which encloses part of the gamma chain. CF(1) is attached to CF(0) by a central stalk formed by the gamma and epsilon chains, while a peripheral stalk is formed by the delta and b chains.

It localises to the cell inner membrane. The catalysed reaction is ATP + H2O + 4 H(+)(in) = ADP + phosphate + 5 H(+)(out). Its function is as follows. Produces ATP from ADP in the presence of a proton gradient across the membrane. The alpha chain is a regulatory subunit. This chain is ATP synthase subunit alpha, found in Ehrlichia chaffeensis (strain ATCC CRL-10679 / Arkansas).